Here is a 416-residue protein sequence, read N- to C-terminus: Nuclear hormone receptor family member nhr-59 (416 aa).

Positions Q17 to F94 form a DNA-binding region, nuclear receptor. 2 NR C4-type zinc fingers span residues C20–C40 and C57–C82. Residues T162–V415 enclose the NR LBD domain.

Belongs to the nuclear hormone receptor family.

The protein resides in the nucleus. In terms of biological role, orphan nuclear receptor. This chain is Nuclear hormone receptor family member nhr-59, found in Caenorhabditis elegans.